A 663-amino-acid polypeptide reads, in one-letter code: Methionine--tRNA ligase (663 aa).

The 'HIGH' region signature appears at 10-20; that stretch reads AYTNGPLHLGH. Zn(2+)-binding residues include Cys142, Cys145, Cys154, and Cys157. Positions 323–327 match the 'KMSKS' region motif; the sequence is KMSTS. Thr326 serves as a coordination point for ATP. Residues 563-663 enclose the tRNA-binding domain; the sequence is YFTKVDLRVG…REISLGSKIH (101 aa).

The protein belongs to the class-I aminoacyl-tRNA synthetase family. MetG type 1 subfamily. Homodimer. Zn(2+) is required as a cofactor.

The protein resides in the cytoplasm. It catalyses the reaction tRNA(Met) + L-methionine + ATP = L-methionyl-tRNA(Met) + AMP + diphosphate. Is required not only for elongation of protein synthesis but also for the initiation of all mRNA translation through initiator tRNA(fMet) aminoacylation. The polypeptide is Methionine--tRNA ligase (Methanococcus vannielii (strain ATCC 35089 / DSM 1224 / JCM 13029 / OCM 148 / SB)).